Here is a 301-residue protein sequence, read N- to C-terminus: uncharacterized protein (301 aa).

Catalysis depends on charge relay system residues serine 44 and tyrosine 107. The Proton donor role is filled by tyrosine 133. Lysine 162 acts as the Schiff-base intermediate with substrate in catalysis.

It belongs to the DapA family. As to quaternary structure, homotetramer.

The protein resides in the cytoplasm. This is an uncharacterized protein from Pyrobaculum arsenaticum (strain DSM 13514 / JCM 11321 / PZ6).